The following is a 61-amino-acid chain: Small ribosomal subunit protein uS14 (61 aa).

Zn(2+) contacts are provided by Cys-24, Cys-27, Cys-40, and Cys-43.

It belongs to the universal ribosomal protein uS14 family. Zinc-binding uS14 subfamily. Part of the 30S ribosomal subunit. Contacts proteins S3 and S10. Zn(2+) serves as cofactor.

In terms of biological role, binds 16S rRNA, required for the assembly of 30S particles and may also be responsible for determining the conformation of the 16S rRNA at the A site. In Anoxybacillus flavithermus (strain DSM 21510 / WK1), this protein is Small ribosomal subunit protein uS14.